The following is a 394-amino-acid chain: MDEGTRTVLRKFEHIEHCLKRNVEAHATNGFEDVHFVHMSLPEIDKDEIDLSVKFLGRKFDYPIMITGMTGGTRKGEVAWKINRTLAQAAEELNIPLGVGSQRAMIEKPETWESYYVRDVAPNVFLVGNLGAPQFGRNAKRKYGVKEVLYAIEKIDADAIAIHMNPLQESVQPEGDTTFSGVLEALAEITSSIDYPVIAKETGAGVSKEVAIKLESIGVSAIDISGVGGTSWSGVEYYRAKDELGKRLALRFWDWGIKTAISLAEVRFSTNLPIIASGGMRDGITMAKALAMGASLVGIALPVLKPAAKGDVEGVIKVIKGYVEEIKNAMFLVGARNVEELRKVPIVFTGFVREWLEQRIDLQEFVKKRAKLRFEFWNVGFYSYPYTSSSTHLF.

10–11 provides a ligand contact to substrate; the sequence is RK. Residues Thr-67, 68–70, Ser-101, and Asn-129 contribute to the FMN site; that span reads GMT. 101–103 contacts substrate; the sequence is SQR. Residue Gln-168 coordinates substrate. Glu-169 contributes to the Mg(2+) binding site. FMN-binding positions include Lys-200, Ser-225, Thr-230, 279 to 281, and 300 to 301; these read GMR and AL.

It belongs to the IPP isomerase type 2 family. As to quaternary structure, homooctamer. Dimer of tetramers. It depends on FMN as a cofactor. Requires NADPH as cofactor. Mg(2+) is required as a cofactor.

Its subcellular location is the cytoplasm. The enzyme catalyses isopentenyl diphosphate = dimethylallyl diphosphate. Its function is as follows. Involved in the biosynthesis of isoprenoids. Catalyzes the 1,3-allylic rearrangement of the homoallylic substrate isopentenyl (IPP) to its allylic isomer, dimethylallyl diphosphate (DMAPP). This Pyrococcus furiosus (strain ATCC 43587 / DSM 3638 / JCM 8422 / Vc1) protein is Isopentenyl-diphosphate delta-isomerase.